We begin with the raw amino-acid sequence, 54 residues long: Secreted virulence factor MC69 (54 aa).

Residues 1–16 (MKAAFVLALCASLASA) form the signal peptide. The cysteines at positions 36 and 46 are disulfide-linked.

This sequence belongs to the MC69 virulence factor family.

It is found in the secreted. Its function is as follows. Secreted protein required for appressorial penetration of intact host epidermal cells and for pathogenicity. This is Secreted virulence factor MC69 from Pyricularia oryzae (strain 70-15 / ATCC MYA-4617 / FGSC 8958) (Rice blast fungus).